The following is a 395-amino-acid chain: MKRFLLCSFALVLLYPAGIDMYLVGLPRIAADLNASEAQLHIAFSVYLAGMATAMLFAGKIADQSGRKPVAIVGALVFMMASLLCSRASEGSLFLSGRFLQGVGAGGCYVVAFAILRDTLDEHRRAKVLSLLNGITCIVPVLAPVVGHLIMLRFPWQSLFYTMSAMGIIVGLLSLFILRETRPARLAPRDLSRSSPAAESLVNRFFVSRLAITTLSVSVILTFVNASPVLLMEVMGFSRGDYAITMALTAGVSMVVSFSTPFALGLFKPRTLMLVSQGLFLTAGVTLSLAHTNTVTLFGLTLICAGFSVGFGVAMSQALGPFSLRAGVASSTLGIAQVCGSSLWIWLAAILGISAMNMLIGILIGCSIVSILLIFSVTPNRSVAEHEEIPYQSRP.

Transmembrane regions (helical) follow at residues 4–24 (FLLCSFALVLLYPAGIDMYLV), 42–62 (IAFSVYLAGMATAMLFAGKIA), 69–89 (PVAIVGALVFMMASLLCSRAS), 93–113 (LFLSGRFLQGVGAGGCYVVAF), 131–151 (LLNGITCIVPVLAPVVGHLIM), 158–178 (SLFYTMSAMGIIVGLLSLFIL), 217–237 (VSVILTFVNASPVLLMEVMGF), 247–267 (ALTAGVSMVVSFSTPFALGLF), 271–291 (TLMLVSQGLFLTAGVTLSLAH), 295–315 (VTLFGLTLICAGFSVGFGVAM), 328–350 (VASSTLGIAQVCGSSLWIWLAAI), and 355–377 (AMNMLIGILIGCSIVSILLIFSV).

The protein belongs to the major facilitator superfamily. DHA1 family. MdtL (TC 2.A.1.2.22) subfamily.

The protein localises to the cell inner membrane. The chain is Multidrug resistance protein MdtL from Salmonella newport (strain SL254).